Reading from the N-terminus, the 335-residue chain is Phospho-N-acetylmuramoyl-pentapeptide-transferase (335 aa).

The next 9 membrane-spanning stretches (helical) occupy residues 2 to 22, 55 to 75, 77 to 97, 118 to 137, 153 to 173, 193 to 213, 238 to 258, 263 to 283, and 313 to 333; these read PPLF…LILV, IPTA…LLLL, CNLW…ALGW, FFIQ…IAYG, LPHC…AIVG, VIAC…WAFI, IFMG…CAVL, FMLL…ILQV, and VVRN…FAVF.

Belongs to the glycosyltransferase 4 family. MraY subfamily. The cofactor is Mg(2+).

It is found in the cell inner membrane. The enzyme catalyses UDP-N-acetyl-alpha-D-muramoyl-L-alanyl-gamma-D-glutamyl-meso-2,6-diaminopimeloyl-D-alanyl-D-alanine + di-trans,octa-cis-undecaprenyl phosphate = di-trans,octa-cis-undecaprenyl diphospho-N-acetyl-alpha-D-muramoyl-L-alanyl-D-glutamyl-meso-2,6-diaminopimeloyl-D-alanyl-D-alanine + UMP. The protein operates within cell wall biogenesis; peptidoglycan biosynthesis. Functionally, catalyzes the initial step of the lipid cycle reactions in the biosynthesis of the cell wall peptidoglycan: transfers peptidoglycan precursor phospho-MurNAc-pentapeptide from UDP-MurNAc-pentapeptide onto the lipid carrier undecaprenyl phosphate, yielding undecaprenyl-pyrophosphoryl-MurNAc-pentapeptide, known as lipid I. The protein is Phospho-N-acetylmuramoyl-pentapeptide-transferase of Chlamydia muridarum (strain MoPn / Nigg).